The primary structure comprises 431 residues: Citrate synthase (431 aa).

Active-site residues include histidine 306 and aspartate 364.

This sequence belongs to the citrate synthase family.

It catalyses the reaction oxaloacetate + acetyl-CoA + H2O = citrate + CoA + H(+). Its pathway is carbohydrate metabolism; tricarboxylic acid cycle; isocitrate from oxaloacetate: step 1/2. The sequence is that of Citrate synthase (gltA) from Bartonella henselae (strain ATCC 49882 / DSM 28221 / CCUG 30454 / Houston 1) (Rochalimaea henselae).